Reading from the N-terminus, the 265-residue chain is Hemin import ATP-binding protein HmuV (265 aa).

An ABC transporter domain is found at 13 to 249 (LKASNLHLQL…TAVENVYGWP (237 aa)). Position 45–52 (45–52 (GPNGAGKS)) interacts with ATP.

It belongs to the ABC transporter superfamily. Heme (hemin) importer (TC 3.A.1.14.5) family. The complex is composed of two ATP-binding proteins (HmuV), two transmembrane proteins (HmuU) and a solute-binding protein (HmuT).

The protein resides in the cell inner membrane. Its function is as follows. Part of the ABC transporter complex HmuTUV involved in hemin import. Responsible for energy coupling to the transport system. The chain is Hemin import ATP-binding protein HmuV from Photobacterium damselae subsp. damselae (Listonella damsela).